We begin with the raw amino-acid sequence, 304 residues long: Aspartate carbamoyltransferase catalytic subunit (304 aa).

Carbamoyl phosphate contacts are provided by R49 and T50. K77 is an L-aspartate binding site. R99, H127, and Q130 together coordinate carbamoyl phosphate. The L-aspartate site is built by R160 and R211. The carbamoyl phosphate site is built by A250 and P251.

The protein belongs to the aspartate/ornithine carbamoyltransferase superfamily. ATCase family. In terms of assembly, heterododecamer (2C3:3R2) of six catalytic PyrB chains organized as two trimers (C3), and six regulatory PyrI chains organized as three dimers (R2).

The catalysed reaction is carbamoyl phosphate + L-aspartate = N-carbamoyl-L-aspartate + phosphate + H(+). It functions in the pathway pyrimidine metabolism; UMP biosynthesis via de novo pathway; (S)-dihydroorotate from bicarbonate: step 2/3. Catalyzes the condensation of carbamoyl phosphate and aspartate to form carbamoyl aspartate and inorganic phosphate, the committed step in the de novo pyrimidine nucleotide biosynthesis pathway. The protein is Aspartate carbamoyltransferase catalytic subunit of Bacillus velezensis (strain DSM 23117 / BGSC 10A6 / LMG 26770 / FZB42) (Bacillus amyloliquefaciens subsp. plantarum).